The sequence spans 258 residues: Sec-independent protein translocase protein TatC (258 aa).

Residues 2–23 (SVEDTQPLITHLIELRKRLLNC) lie on the Cytoplasmic side of the membrane. Residues 24–44 (IISVIVIFLCLVYFANDIYHL) form a helical membrane-spanning segment. The Periplasmic segment spans residues 45–75 (VSAPLIKQLPQGSTMIATDVASPFFTPIKLT). The helical transmembrane segment at 76 to 96 (FMVSLILSAPVILYQVWAFIA) threads the bilayer. Over 97-115 (PALYKHERRLVVPLLVSSS) the chain is Cytoplasmic. Residues 116-136 (LLFYIGMAFAYFVVFPLAFGF) form a helical membrane-spanning segment. Residues 137-156 (LANTAPEGVQVSTDIASYLS) lie on the Periplasmic side of the membrane. A helical membrane pass occupies residues 157–177 (FVMALFMAFGVSFEVPVAIVL). At 178 to 192 (LCWMGITSPEDLRKK) the chain is on the cytoplasmic side. A helical transmembrane segment spans residues 193 to 210 (RPYVLVGAFVVGMLLTPP). A topological domain (periplasmic) is located at residue D211. The chain crosses the membrane as a helical span at residues 212–232 (VFSQTLLAIPMYCLFEIGVFF). Residues 233-258 (SRFYVGKGRNREEENDAEAESEKTEE) are Cytoplasmic-facing.

The protein belongs to the TatC family. As to quaternary structure, the Tat system comprises two distinct complexes: a TatABC complex, containing multiple copies of TatA, TatB and TatC subunits, and a separate TatA complex, containing only TatA subunits. Substrates initially bind to the TatABC complex, which probably triggers association of the separate TatA complex to form the active translocon.

It localises to the cell inner membrane. In terms of biological role, part of the twin-arginine translocation (Tat) system that transports large folded proteins containing a characteristic twin-arginine motif in their signal peptide across membranes. Together with TatB, TatC is part of a receptor directly interacting with Tat signal peptides. The protein is Sec-independent protein translocase protein TatC of Escherichia coli O6:H1 (strain CFT073 / ATCC 700928 / UPEC).